Consider the following 200-residue polypeptide: MGNLFARKRRSRVTEQDKAVLQLKQQRDKLKQYQKKITLQLQRERELAKQLLHDGKKEKAKLLLKKKRYQEQLLEKTDNQISNLEKMVEDIEFAQIEMKVIEGLKVGNECLKKMHEVMSIEEVERIMDETQEGIEYQRQIDEMLSGSLTAEDEEAILEELEAITQEDLELPEAPSEPLPDTIPEKQAVKNKPKPQMIAAS.

Residue G2 is the site of N-myristoyl glycine attachment. The stretch at R9–E102 forms a coiled coil. The segment at E166 to S200 is disordered. A Type-2 MIT-interacting motif motif is present at residues L168 to P179.

The protein belongs to the SNF7 family. As to quaternary structure, probable core component of the endosomal sorting required for transport complex III (ESCRT-III). ESCRT-III components are thought to multimerize to form a flat lattice on the perimeter membrane of the endosome.

The protein localises to the endomembrane system. Its subcellular location is the late endosome membrane. Functionally, probable core component of the endosomal sorting required for transport complex III (ESCRT-III) which is involved in multivesicular bodies (MVBs) formation and sorting of endosomal cargo proteins into MVBs. MVBs contain intraluminal vesicles (ILVs) that are generated by invagination and scission from the limiting membrane of the endosome and mostly are delivered to lysosomes enabling degradation of membrane proteins, such as stimulated growth factor receptors, lysosomal enzymes and lipids. In the ESCRT-III complex, it probably serves as an acceptor for the ESCRT-II complex on endosomal membranes. The chain is Charged multivesicular body protein 6-A (chmp6-a) from Xenopus laevis (African clawed frog).